We begin with the raw amino-acid sequence, 144 residues long: Small ribosomal subunit protein eS19A (144 aa).

Belongs to the eukaryotic ribosomal protein eS19 family. As to quaternary structure, component of the small ribosomal subunit (SSU). Mature yeast ribosomes consist of a small (40S) and a large (60S) subunit. The 40S small subunit contains 1 molecule of ribosomal RNA (18S rRNA) and 33 different proteins (encoded by 57 genes). The large 60S subunit contains 3 rRNA molecules (25S, 5.8S and 5S rRNA) and 46 different proteins (encoded by 81 genes).

The protein resides in the cytoplasm. Its function is as follows. Component of the ribosome, a large ribonucleoprotein complex responsible for the synthesis of proteins in the cell. The small ribosomal subunit (SSU) binds messenger RNAs (mRNAs) and translates the encoded message by selecting cognate aminoacyl-transfer RNA (tRNA) molecules. The large subunit (LSU) contains the ribosomal catalytic site termed the peptidyl transferase center (PTC), which catalyzes the formation of peptide bonds, thereby polymerizing the amino acids delivered by tRNAs into a polypeptide chain. The nascent polypeptides leave the ribosome through a tunnel in the LSU and interact with protein factors that function in enzymatic processing, targeting, and the membrane insertion of nascent chains at the exit of the ribosomal tunnel. eS19 is required for proper maturation of the small (40S) ribosomal subunit. Binds to 40S pre-ribosomal particles, probably required after association of NOC4 but before association of ENP1, TSR1 and RIO2 with 20/21S pre-rRNA. This Saccharomyces cerevisiae (strain ATCC 204508 / S288c) (Baker's yeast) protein is Small ribosomal subunit protein eS19A.